The sequence spans 450 residues: MGKLFGTDGVRGVANLELTPELAFQLGRAGSYVLARHEASKRPRILVGKDTRISGDMLEAALIAGICSTGADVLTVGILPTPAVAFLTQRYQASCGVVISASHNPLEDNGIKFFGPSGYKLPDELEEEIEELVLAGTQELQRPQGEDVGRVYLVAEARNNYLDYLISCYSQDQNLAGITVVVDCANGAAYSTGPELWSRLGAQVIAINNYPNGVNINERCGSTYTEGLRRAVVEHKADMGIAYDGDADRCIVVDERGNELDGDHIIMICALDMNSRGELNPPLVAATVMSNIGLDIALRRENIQVASCKVGDRYVLEKMKESGALLGGEQSGHIIFLEHATTGDGLLTSLKVAEVLRRSGLTLSELARGLEKQPQLLVNLRMENKDKILAHPLVQEALKQAEERLGEWGKLVVRPSGTEPVVRIMAQGPEQYLLEEVIAEIKQSIERAQA.

Ser-102 functions as the Phosphoserine intermediate in the catalytic mechanism. Positions 102, 244, 246, and 248 each coordinate Mg(2+). At Ser-102 the chain carries Phosphoserine.

Belongs to the phosphohexose mutase family. Mg(2+) is required as a cofactor. Post-translationally, activated by phosphorylation.

The enzyme catalyses alpha-D-glucosamine 1-phosphate = D-glucosamine 6-phosphate. Functionally, catalyzes the conversion of glucosamine-6-phosphate to glucosamine-1-phosphate. The sequence is that of Phosphoglucosamine mutase from Syntrophomonas wolfei subsp. wolfei (strain DSM 2245B / Goettingen).